The sequence spans 323 residues: Aldo-keto reductase family 1 member C21 (323 aa).

Residue 20–24 (GFGTA) coordinates NADP(+). Substrate is bound at residue K31. An NADP(+)-binding site is contributed by D50. Catalysis depends on Y55, which acts as the Proton donor. Substrate is bound at residue H117. NADP(+) contacts are provided by residues 166-167 (SN), Q190, 216-224 (YGVLGTQRY), and 270-280 (TSLKEERIKEN).

The protein belongs to the aldo/keto reductase family. In terms of assembly, monomer. As to expression, detected in kidney and brain.

The protein resides in the cytoplasm. It catalyses the reaction androsterone + NADP(+) = 5alpha-androstan-3,17-dione + NADPH + H(+). The enzyme catalyses androsterone + NAD(+) = 5alpha-androstan-3,17-dione + NADH + H(+). Its activity is regulated as follows. Inhibited by high concentrations of substrate. Functionally, NADP-dependent 17-alpha-hydroxysteroid dehydrogenase that converts 5-alpha-androstane-3,17-dione into androsterone. Has lower 3-alpha-hydroxysteroid dehydrogenase activity. Has broad substrate specificity and acts on various 17-alpha-hydroxysteroids, 17-ketosteroids, 3-alpha hydroxysteroids and 3-ketosteroids. Reduction of keto groups is strictly stereoselective. Reduction of 17-ketosteroids yields only 17-alpha-hydroxysteroids. Likewise, reduction of 3-ketosteroids yields only 3-alpha-hydroxysteroids. The polypeptide is Aldo-keto reductase family 1 member C21 (Akr1c21) (Mus musculus (Mouse)).